A 386-amino-acid chain; its full sequence is Putative gustatory receptor 92a (386 aa).

Residues 1–14 (MFEFLHQMSAPKLS) are Cytoplasmic-facing. A helical transmembrane segment spans residues 15-35 (TSILRYIFRYAQFIGVIFFCL). At 36–79 (HTRKDDKTVFIRNWLKWLNVTHRIITFTRFFWVYIASISIKTNR) the chain is on the extracellular side. The N-linked (GlcNAc...) asparagine glycan is linked to Asn54. A helical membrane pass occupies residues 80-100 (VLQVLHGMRLVLSIPNVAVIL). At 101–141 (CYHIFRGPEIIDLINQFLRLFRQVSDLFKTKTPGFGGRREL) the chain is on the cytoplasmic side. The chain crosses the membrane as a helical span at residues 142–162 (ILILLNLISFAHEQTYLWFTI). At 163 to 169 (RKGFSWR) the chain is on the extracellular side. A helical membrane pass occupies residues 170–190 (FLIDWWCDFYLVSATNIFIHI). The Cytoplasmic segment spans residues 191–256 (NSIGYLSLGV…YHTSIMFHKL (66 aa)). A helical transmembrane segment spans residues 257-277 (FVPLLFLALIYKVLLIALIGF). Over 278 to 287 (NVAVEFYLNS) the chain is Extracellular. Residues 288 to 308 (FIFWILLGKHVLDLFLVTVSV) traverse the membrane as a helical segment. Residues 309-356 (EGAVNQFLNIGMQFGNVGDLSKFQTTLDTLFLHLRLGHFRVSILGLFD) are Cytoplasmic-facing. Residues 357–377 (VTQMQYLQFLSALLSGLAFIA) form a helical membrane-spanning segment. Residues 378–386 (QYRMQVGNG) lie on the Extracellular side of the membrane.

The protein belongs to the insect chemoreceptor superfamily. Gustatory receptor (GR) family. Gr93a subfamily.

It localises to the cell membrane. Functionally, probable gustatory receptor which mediates acceptance or avoidance behavior, depending on its substrates. The polypeptide is Putative gustatory receptor 92a (Gr92a) (Drosophila melanogaster (Fruit fly)).